Consider the following 410-residue polypeptide: Multifunctional CCA protein (410 aa).

Residues Gly-8 and Arg-11 each coordinate ATP. Gly-8 and Arg-11 together coordinate CTP. Mg(2+) contacts are provided by Asp-21 and Asp-23. ATP-binding residues include Arg-91, Arg-137, and Arg-140. CTP is bound by residues Arg-91, Arg-137, and Arg-140. The HD domain occupies 228 to 329 (TGVHVLSVLQ…LELLQSFDVY (102 aa)).

It belongs to the tRNA nucleotidyltransferase/poly(A) polymerase family. Bacterial CCA-adding enzyme type 1 subfamily. In terms of assembly, monomer. Can also form homodimers and oligomers. It depends on Mg(2+) as a cofactor. Ni(2+) serves as cofactor.

It carries out the reaction a tRNA precursor + 2 CTP + ATP = a tRNA with a 3' CCA end + 3 diphosphate. It catalyses the reaction a tRNA with a 3' CCA end + 2 CTP + ATP = a tRNA with a 3' CCACCA end + 3 diphosphate. Its function is as follows. Catalyzes the addition and repair of the essential 3'-terminal CCA sequence in tRNAs without using a nucleic acid template. Adds these three nucleotides in the order of C, C, and A to the tRNA nucleotide-73, using CTP and ATP as substrates and producing inorganic pyrophosphate. tRNA 3'-terminal CCA addition is required both for tRNA processing and repair. Also involved in tRNA surveillance by mediating tandem CCA addition to generate a CCACCA at the 3' terminus of unstable tRNAs. While stable tRNAs receive only 3'-terminal CCA, unstable tRNAs are marked with CCACCA and rapidly degraded. The sequence is that of Multifunctional CCA protein from Pseudomonas paraeruginosa (strain DSM 24068 / PA7) (Pseudomonas aeruginosa (strain PA7)).